Consider the following 95-residue polypeptide: Aspartyl/glutamyl-tRNA(Asn/Gln) amidotransferase subunit C (95 aa).

The protein belongs to the GatC family. Heterotrimer of A, B and C subunits.

It catalyses the reaction L-glutamyl-tRNA(Gln) + L-glutamine + ATP + H2O = L-glutaminyl-tRNA(Gln) + L-glutamate + ADP + phosphate + H(+). The enzyme catalyses L-aspartyl-tRNA(Asn) + L-glutamine + ATP + H2O = L-asparaginyl-tRNA(Asn) + L-glutamate + ADP + phosphate + 2 H(+). Allows the formation of correctly charged Asn-tRNA(Asn) or Gln-tRNA(Gln) through the transamidation of misacylated Asp-tRNA(Asn) or Glu-tRNA(Gln) in organisms which lack either or both of asparaginyl-tRNA or glutaminyl-tRNA synthetases. The reaction takes place in the presence of glutamine and ATP through an activated phospho-Asp-tRNA(Asn) or phospho-Glu-tRNA(Gln). This Brucella anthropi (strain ATCC 49188 / DSM 6882 / CCUG 24695 / JCM 21032 / LMG 3331 / NBRC 15819 / NCTC 12168 / Alc 37) (Ochrobactrum anthropi) protein is Aspartyl/glutamyl-tRNA(Asn/Gln) amidotransferase subunit C.